A 173-amino-acid chain; its full sequence is Alpha-crystallin A chain (173 aa).

An N-acetylmethionine modification is found at Met-1. The 111-residue stretch at 52-162 (LFRTVLESGI…SHNERPIPVS (111 aa)) folds into the sHSP domain. 4 residues coordinate Zn(2+): His-100, Glu-102, His-107, and His-154. Positions 144 to 173 (PKVQSNTDPSHNERPIPVSREEKPTSAPPS) are disordered. Residues 153–167 (SHNERPIPVSREEKP) show a composition bias toward basic and acidic residues. O-linked (GlcNAc) serine glycosylation is present at Ser-162.

The protein belongs to the small heat shock protein (HSP20) family. In terms of assembly, heteropolymer composed of three CRYAA and one CRYAB subunits. Inter-subunit bridging via zinc ions enhances stability, which is crucial as there is no protein turn over in the lens. Can also form homodimers and homotetramers (dimers of dimers) which serve as the building blocks of homooligomers. Within homooligomers, the zinc-binding motif is created from residues of 3 different molecules. His-100 and Glu-102 from one molecule are ligands of the zinc ion, and His-107 and His-154 residues from additional molecules complete the site with tetrahedral coordination geometry.

It localises to the cytoplasm. The protein resides in the nucleus. In terms of biological role, contributes to the transparency and refractive index of the lens. May act as a chaperone, preventing aggregation of various proteins under a wide range of stress conditions. This Tupinambis teguixin (Golden tegu) protein is Alpha-crystallin A chain (CRYAA).